Reading from the N-terminus, the 548-residue chain is MSAKEIRFNEEGRNAILRGVNALADAVKVTLGPKGRNVIIEKSFGSPLITKDGVSVAKEVELENKFENMGAQLVKEVASKTSDVAGDGTTTATVLAQAIYKQGSKLVAAGHNPMEIKRGIDKAVEAIVAELQKISKPIKDHKEIAQVGTISANNDKTIGDIIAEAMEKVGKEGVITVEEAKAMETSLETVEGMQFDRGYLSPYFVSDPERMEATLENATILIYDKKISNMKDMLPVLEQTAKSGRPLMIIAEDIEGEALATLVVNKLRGVLNVCAVKAPGFGDRRKAMLEDIAILTGGKVISEEMGFKLENTTMEMLGRAKRIVVDKDNTTIIDGDGSEADIQGRVKQIRAQIEDTTSDYDREKLQERLAKLVGGVAVIKVGAATETEMKEKKARVEDALHATRAAVDEGIVPGGGVAYIRALNALDSVVLPAEQQFGVTIIKSSLEAPIRQIADNAGIDASIVVDKVKNGKEAFGYNAADDTYVDMLEAGIIDPTKVSRCALQNASSVAGLMLTTECMIAEKPKKDSGMPAMPGGMGGMGGMGGMDY.

ATP is bound by residues 30–33 (TLGP), Lys-51, 87–91 (DGTTT), Gly-415, 478–480 (NAA), and Asp-494.

Belongs to the chaperonin (HSP60) family. As to quaternary structure, forms a cylinder of 14 subunits composed of two heptameric rings stacked back-to-back. Interacts with the co-chaperonin GroES.

It is found in the cytoplasm. The enzyme catalyses ATP + H2O + a folded polypeptide = ADP + phosphate + an unfolded polypeptide.. Functionally, together with its co-chaperonin GroES, plays an essential role in assisting protein folding. The GroEL-GroES system forms a nano-cage that allows encapsulation of the non-native substrate proteins and provides a physical environment optimized to promote and accelerate protein folding. The polypeptide is Chaperonin GroEL (Trichlorobacter lovleyi (strain ATCC BAA-1151 / DSM 17278 / SZ) (Geobacter lovleyi)).